The primary structure comprises 287 residues: 4-hydroxybenzoate octaprenyltransferase (287 aa).

6 helical membrane passes run 41 to 61, 89 to 109, 133 to 153, 158 to 178, 202 to 224, and 266 to 286; these read WPLLVIFTLGTLLMRSAGCAM, WEAVAIAVGLSFIAFLLILPL, FFAIPQAYLGIAFGFGIPMAF, DTVPMLAWVMLVANIFWSVAY, FGRFDVAAVMACYAATLGIYVWI, and HNNWLGGVLFAGIAAHYLLAG.

The protein belongs to the UbiA prenyltransferase family. It depends on Mg(2+) as a cofactor.

The protein resides in the cell inner membrane. It carries out the reaction all-trans-octaprenyl diphosphate + 4-hydroxybenzoate = 4-hydroxy-3-(all-trans-octaprenyl)benzoate + diphosphate. The protein operates within cofactor biosynthesis; ubiquinone biosynthesis. Its function is as follows. Catalyzes the prenylation of para-hydroxybenzoate (PHB) with an all-trans polyprenyl group. Mediates the second step in the final reaction sequence of ubiquinone-8 (UQ-8) biosynthesis, which is the condensation of the polyisoprenoid side chain with PHB, generating the first membrane-bound Q intermediate 3-octaprenyl-4-hydroxybenzoate. The chain is 4-hydroxybenzoate octaprenyltransferase from Burkholderia cenocepacia (strain HI2424).